The following is a 481-amino-acid chain: Pyruvate kinase (481 aa).

Arg36 is a binding site for substrate. Residues Asn38, Ser40, and Asp70 each contribute to the K(+) site. 38-41 (NFSH) contacts ATP. ATP-binding residues include Arg77 and Lys160. Residue Glu225 participates in Mg(2+) binding. Substrate is bound by residues Gly251, Asp252, and Thr284. Residue Asp252 coordinates Mg(2+).

It belongs to the pyruvate kinase family. In terms of assembly, homotetramer. Mg(2+) is required as a cofactor. The cofactor is K(+).

It catalyses the reaction pyruvate + ATP = phosphoenolpyruvate + ADP + H(+). Its pathway is carbohydrate degradation; glycolysis; pyruvate from D-glyceraldehyde 3-phosphate: step 5/5. With respect to regulation, allosterically activated by AMP and by several sugar phosphates. Belongs to type II PK. This is Pyruvate kinase (pykA) from Buchnera aphidicola subsp. Schizaphis graminum (strain Sg).